The following is a 139-amino-acid chain: Putative pre-16S rRNA nuclease (139 aa).

It belongs to the YqgF nuclease family.

Its subcellular location is the cytoplasm. In terms of biological role, could be a nuclease involved in processing of the 5'-end of pre-16S rRNA. The protein is Putative pre-16S rRNA nuclease of Rippkaea orientalis (strain PCC 8801 / RF-1) (Cyanothece sp. (strain PCC 8801)).